Consider the following 106-residue polypeptide: NADH-quinone oxidoreductase subunit K (106 aa).

Transmembrane regions (helical) follow at residues 8 to 28 (IGIE…IFGV), 35 to 55 (IIMF…FVAF), and 66 to 86 (VFVF…LAIL).

The protein belongs to the complex I subunit 4L family. As to quaternary structure, NDH-1 is composed of 14 different subunits. Subunits NuoA, H, J, K, L, M, N constitute the membrane sector of the complex.

The protein localises to the cell inner membrane. It carries out the reaction a quinone + NADH + 5 H(+)(in) = a quinol + NAD(+) + 4 H(+)(out). In terms of biological role, NDH-1 shuttles electrons from NADH, via FMN and iron-sulfur (Fe-S) centers, to quinones in the respiratory chain. The immediate electron acceptor for the enzyme in this species is believed to be a menaquinone. Couples the redox reaction to proton translocation (for every two electrons transferred, four hydrogen ions are translocated across the cytoplasmic membrane), and thus conserves the redox energy in a proton gradient. This is NADH-quinone oxidoreductase subunit K from Flavobacterium psychrophilum (strain ATCC 49511 / DSM 21280 / CIP 103535 / JIP02/86).